The sequence spans 376 residues: Lipid-A-disaccharide synthase (376 aa).

This sequence belongs to the LpxB family.

It catalyses the reaction a lipid X + a UDP-2-N,3-O-bis[(3R)-3-hydroxyacyl]-alpha-D-glucosamine = a lipid A disaccharide + UDP + H(+). It functions in the pathway bacterial outer membrane biogenesis; LPS lipid A biosynthesis. Functionally, condensation of UDP-2,3-diacylglucosamine and 2,3-diacylglucosamine-1-phosphate to form lipid A disaccharide, a precursor of lipid A, a phosphorylated glycolipid that anchors the lipopolysaccharide to the outer membrane of the cell. This is Lipid-A-disaccharide synthase from Pseudomonas fluorescens (strain Pf0-1).